A 497-amino-acid chain; its full sequence is Probable cytosol aminopeptidase (497 aa).

Residues Lys-263 and Asp-268 each contribute to the Mn(2+) site. Residue Lys-275 is part of the active site. 3 residues coordinate Mn(2+): Asp-286, Asp-345, and Glu-347. The active site involves Arg-349.

This sequence belongs to the peptidase M17 family. It depends on Mn(2+) as a cofactor.

Its subcellular location is the cytoplasm. The enzyme catalyses Release of an N-terminal amino acid, Xaa-|-Yaa-, in which Xaa is preferably Leu, but may be other amino acids including Pro although not Arg or Lys, and Yaa may be Pro. Amino acid amides and methyl esters are also readily hydrolyzed, but rates on arylamides are exceedingly low.. The catalysed reaction is Release of an N-terminal amino acid, preferentially leucine, but not glutamic or aspartic acids.. Functionally, presumably involved in the processing and regular turnover of intracellular proteins. Catalyzes the removal of unsubstituted N-terminal amino acids from various peptides. The polypeptide is Probable cytosol aminopeptidase (Rhizobium meliloti (strain 1021) (Ensifer meliloti)).